Reading from the N-terminus, the 164-residue chain is Lipoprotein signal peptidase (164 aa).

The next 3 membrane-spanning stretches (helical) occupy residues W12–Q32, W70–L90, and A102–V122. Active-site residues include D123 and D141. A helical membrane pass occupies residues F137 to L157.

The protein belongs to the peptidase A8 family.

Its subcellular location is the cell inner membrane. It catalyses the reaction Release of signal peptides from bacterial membrane prolipoproteins. Hydrolyzes -Xaa-Yaa-Zaa-|-(S,diacylglyceryl)Cys-, in which Xaa is hydrophobic (preferably Leu), and Yaa (Ala or Ser) and Zaa (Gly or Ala) have small, neutral side chains.. Its pathway is protein modification; lipoprotein biosynthesis (signal peptide cleavage). Functionally, this protein specifically catalyzes the removal of signal peptides from prolipoproteins. This chain is Lipoprotein signal peptidase, found in Shigella boydii serotype 4 (strain Sb227).